A 172-amino-acid polypeptide reads, in one-letter code: RNA silencing suppressor p19 (172 aa).

Positions 1–20 are enriched in basic and acidic residues; sequence MERAIQGNDAREQANSERWD. The disordered stretch occupies residues 1–38; sequence MERAIQGNDAREQANSERWDGGSGGTTSPFKLPDESPS.

This sequence belongs to the tombusviruses protein p19 family. As to quaternary structure, homodimer.

Its function is as follows. Acts as a suppressor of RNA-mediated gene silencing, also known as post-transcriptional gene silencing (PTGS), a mechanism of plant viral defense that limits the accumulation of viral RNAs. Binds to short interfering RNAs (siRNAs) with high affinity. Acts as a molecular caliper to specifically select siRNAs based on the length of the duplex region of the RNA. The chain is RNA silencing suppressor p19 from Capsicum annuum (Capsicum pepper).